The primary structure comprises 92 residues: UPF0250 protein COSY_0496 (92 aa).

Belongs to the UPF0250 family.

The polypeptide is UPF0250 protein COSY_0496 (Vesicomyosocius okutanii subsp. Calyptogena okutanii (strain HA)).